Here is a 475-residue protein sequence, read N- to C-terminus: Cytosolic non-specific dipeptidase (475 aa).

The residue at position 58 (Ser58) is a Phosphoserine. His99 is a Mn(2+) binding site. Asp101 is a catalytic residue. Residue Asp132 participates in Mn(2+) binding. Glu166 serves as the catalytic Proton acceptor. Substrate contacts are provided by residues 166-167 (EE), Asp195, and His228. The Mn(2+) site is built by Glu167 and Asp195. Ser299 carries the post-translational modification Phosphoserine. 4 residues coordinate substrate: Thr330, Arg343, Ser417, and His445. His445 contributes to the Mn(2+) binding site.

The protein belongs to the peptidase M20A family. In terms of assembly, homodimer. Mn(2+) serves as cofactor. In terms of tissue distribution, highly expressed in the parafascicular nucleus of the thalamus, tuberomammillary nucleus of the hypothalamus and the mitral cell layer of the olfactory bulb.

Its subcellular location is the cytoplasm. The enzyme catalyses Hydrolysis of dipeptides, preferentially hydrophobic dipeptides including prolyl amino acids.. It catalyses the reaction L-threonyl-L-threonine + H2O = 2 L-threonine. It carries out the reaction L-threonyl-L-serine + H2O = L-threonine + L-serine. The catalysed reaction is L-seryl-L-threonine + H2O = L-threonine + L-serine. The enzyme catalyses L-cysteinylglycine + H2O = L-cysteine + glycine. It catalyses the reaction L-alanyl-L-cysteine + H2O = L-cysteine + L-alanine. It carries out the reaction (S)-lactate + L-phenylalanine = N-[(S)-lactoyl]-L-phenylalanine + H2O. Its activity is regulated as follows. Inhibited by bestatin. Its function is as follows. Catalyzes the peptide bond hydrolysis in dipeptides, displaying a non-redundant activity toward threonyl dipeptides. Mediates threonyl dipeptide catabolism in a tissue-specific way. Has high dipeptidase activity toward cysteinylglycine, an intermediate metabolite in glutathione metabolism. Metabolizes N-lactoyl-amino acids, both through hydrolysis to form lactic acid and amino acids, as well as through their formation by reverse proteolysis. Plays a role in the regulation of cell cycle arrest and apoptosis. The sequence is that of Cytosolic non-specific dipeptidase (Cndp2) from Mus musculus (Mouse).